Reading from the N-terminus, the 128-residue chain is Large ribosomal subunit protein bL19 (128 aa).

Belongs to the bacterial ribosomal protein bL19 family.

This protein is located at the 30S-50S ribosomal subunit interface and may play a role in the structure and function of the aminoacyl-tRNA binding site. This Janthinobacterium sp. (strain Marseille) (Minibacterium massiliensis) protein is Large ribosomal subunit protein bL19.